Consider the following 321-residue polypeptide: Sideroflexin-1-3 (321 aa).

Helical transmembrane passes span 101–121 (IITG…FWQW), 146–168 (LVTS…NHAV), 174–194 (LLGR…NIPC), 220–240 (AAVV…IPGM), and 266–286 (IQTL…CAFF).

Belongs to the sideroflexin family.

Its subcellular location is the mitochondrion membrane. Mitochondrial amino-acid transporter that mediates transport of serine into mitochondria. The protein is Sideroflexin-1-3 of Drosophila melanogaster (Fruit fly).